Reading from the N-terminus, the 597-residue chain is Arginine--tRNA ligase (597 aa).

The 'HIGH' region signature appears at 125 to 135; it reads PNTNKPLHLGH.

Belongs to the class-I aminoacyl-tRNA synthetase family. As to quaternary structure, monomer.

The protein localises to the cytoplasm. The enzyme catalyses tRNA(Arg) + L-arginine + ATP = L-arginyl-tRNA(Arg) + AMP + diphosphate. The chain is Arginine--tRNA ligase from Porphyromonas gingivalis (strain ATCC BAA-308 / W83).